A 153-amino-acid polypeptide reads, in one-letter code: Endoribonuclease YbeY (153 aa).

His-115, His-119, and His-125 together coordinate Zn(2+).

The protein belongs to the endoribonuclease YbeY family. Zn(2+) is required as a cofactor.

Its subcellular location is the cytoplasm. Its function is as follows. Single strand-specific metallo-endoribonuclease involved in late-stage 70S ribosome quality control and in maturation of the 3' terminus of the 16S rRNA. The polypeptide is Endoribonuclease YbeY (Blochmanniella floridana).